A 159-amino-acid polypeptide reads, in one-letter code: Probable inactive acireductone dioxygenase 2 (159 aa).

Belongs to the acireductone dioxygenase (ARD) family.

Its subcellular location is the cytoplasm. The protein localises to the nucleus. Functionally, probable inactive acireductone dioxygenase. The chain is Probable inactive acireductone dioxygenase 2 from Caenorhabditis briggsae.